Here is a 275-residue protein sequence, read N- to C-terminus: uncharacterized protein (275 aa).

The region spanning 1-162 (NLFSVIVSLI…ITSYWTEVQR (162 aa)) is the ABC transmembrane type-1 domain. 3 consecutive transmembrane segments (helical) span residues 21–41 (LYLV…GNIM), 106–126 (IMNL…YYLM), and 137–157 (FAYV…TSYW).

Its subcellular location is the cell membrane. This is an uncharacterized protein from Staphylococcus epidermidis.